A 442-amino-acid polypeptide reads, in one-letter code: Trigger factor (442 aa).

In terms of domain architecture, PPIase FKBP-type spans 163–248; the sequence is YDRVTINYCI…IIKIEKKQEL (86 aa).

It belongs to the FKBP-type PPIase family. Tig subfamily.

It localises to the cytoplasm. The catalysed reaction is [protein]-peptidylproline (omega=180) = [protein]-peptidylproline (omega=0). Its function is as follows. Involved in protein export. Acts as a chaperone by maintaining the newly synthesized protein in an open conformation. Functions as a peptidyl-prolyl cis-trans isomerase. In Buchnera aphidicola subsp. Acyrthosiphon pisum (strain 5A), this protein is Trigger factor.